The following is a 104-amino-acid chain: Large ribosomal subunit protein uL24 (104 aa).

It belongs to the universal ribosomal protein uL24 family. In terms of assembly, part of the 50S ribosomal subunit.

Functionally, one of two assembly initiator proteins, it binds directly to the 5'-end of the 23S rRNA, where it nucleates assembly of the 50S subunit. In terms of biological role, one of the proteins that surrounds the polypeptide exit tunnel on the outside of the subunit. In Pseudoalteromonas atlantica (strain T6c / ATCC BAA-1087), this protein is Large ribosomal subunit protein uL24.